The sequence spans 552 residues: Protoheme IX farnesyltransferase, mitochondrial (552 aa).

A disordered region spans residues A118–S185. The segment covering E150–P168 has biased composition (low complexity). The next 8 membrane-spanning stretches (helical) occupy residues L215–F235, L245–L267, A296–V316, P318–L338, T346–G366, A387–L407, V441–V461, and A487–L507.

Belongs to the UbiA prenyltransferase family.

The protein resides in the mitochondrion membrane. It carries out the reaction heme b + (2E,6E)-farnesyl diphosphate + H2O = Fe(II)-heme o + diphosphate. Converts protoheme IX and farnesyl diphosphate to heme O. The sequence is that of Protoheme IX farnesyltransferase, mitochondrial (COX10) from Pyricularia oryzae (strain 70-15 / ATCC MYA-4617 / FGSC 8958) (Rice blast fungus).